Reading from the N-terminus, the 308-residue chain is B3 domain-containing protein REM23 (308 aa).

Residues 19–114 (FFKVLKRSDM…SFTVKIFNKD (96 aa)) constitute a DNA-binding region (TF-B3 1). The interval 117 to 198 (EMMQPPQSRA…TERTQNSKRT (82 aa)) is disordered. The span at 121–133 (PPQSRASFASSSR) shows a compositional bias: polar residues. Over residues 134-145 (VKTEQDVKREEE) the composition is skewed to basic and acidic residues. The span at 149 to 166 (SSDSRSRGPTTAAETNRG) shows a compositional bias: polar residues. Positions 168-177 (SYKRKLNFGK) are enriched in basic residues. Basic and acidic residues predominate over residues 178–198 (KKAEETQTYKRTERTQNSKRT). The TF-B3 2 DNA-binding region spans 216-308 (VAGFKIFISK…LELLLVVSKP (93 aa)).

Its subcellular location is the nucleus. The sequence is that of B3 domain-containing protein REM23 (REM23) from Arabidopsis thaliana (Mouse-ear cress).